We begin with the raw amino-acid sequence, 420 residues long: Gamma-glutamyl phosphate reductase 2 (420 aa).

This sequence belongs to the gamma-glutamyl phosphate reductase family.

Its subcellular location is the cytoplasm. It catalyses the reaction L-glutamate 5-semialdehyde + phosphate + NADP(+) = L-glutamyl 5-phosphate + NADPH + H(+). It participates in amino-acid biosynthesis; L-proline biosynthesis; L-glutamate 5-semialdehyde from L-glutamate: step 2/2. Its function is as follows. Catalyzes the NADPH-dependent reduction of L-glutamate 5-phosphate into L-glutamate 5-semialdehyde and phosphate. The product spontaneously undergoes cyclization to form 1-pyrroline-5-carboxylate. This is Gamma-glutamyl phosphate reductase 2 from Synechocystis sp. (strain ATCC 27184 / PCC 6803 / Kazusa).